A 160-amino-acid chain; its full sequence is Transcription elongation factor GreA 2 (160 aa).

The stretch at 9-73 forms a coiled coil; the sequence is MTEEGKVKLE…RIKTVEHMLQ (65 aa).

Belongs to the GreA/GreB family.

In terms of biological role, necessary for efficient RNA polymerase transcription elongation past template-encoded arresting sites. The arresting sites in DNA have the property of trapping a certain fraction of elongating RNA polymerases that pass through, resulting in locked ternary complexes. Cleavage of the nascent transcript by cleavage factors such as GreA or GreB allows the resumption of elongation from the new 3'terminus. GreA releases sequences of 2 to 3 nucleotides. The polypeptide is Transcription elongation factor GreA 2 (Lactiplantibacillus plantarum (strain ATCC BAA-793 / NCIMB 8826 / WCFS1) (Lactobacillus plantarum)).